The primary structure comprises 340 residues: Phenylalanine--tRNA ligase alpha subunit (340 aa).

Residue E255 coordinates Mg(2+).

This sequence belongs to the class-II aminoacyl-tRNA synthetase family. Phe-tRNA synthetase alpha subunit type 1 subfamily. In terms of assembly, tetramer of two alpha and two beta subunits. Mg(2+) serves as cofactor.

It is found in the cytoplasm. It carries out the reaction tRNA(Phe) + L-phenylalanine + ATP = L-phenylalanyl-tRNA(Phe) + AMP + diphosphate + H(+). The polypeptide is Phenylalanine--tRNA ligase alpha subunit (Heliobacterium modesticaldum (strain ATCC 51547 / Ice1)).